The sequence spans 136 residues: Single-stranded DNA-binding protein 1 (136 aa).

Residues 4–109 (LNKMQLIGNL…IMAKEMQMLG (106 aa)) form the SSB domain. Residues 109–136 (GKKQDNNKVGNARHGDALPADEDDYYDF) are disordered. Residues 127-136 (PADEDDYYDF) show a composition bias toward acidic residues.

As to quaternary structure, homotetramer.

The polypeptide is Single-stranded DNA-binding protein 1 (ssb1) (Xylella fastidiosa (strain 9a5c)).